The chain runs to 81 residues: Acyl carrier protein (81 aa).

In terms of domain architecture, Carrier spans 2-80 (ASEQEILSGL…DAVAYISQAQ (79 aa)). Ser-40 is subject to O-(pantetheine 4'-phosphoryl)serine.

The protein belongs to the acyl carrier protein (ACP) family. 4'-phosphopantetheine is transferred from CoA to a specific serine of apo-ACP by AcpS. This modification is essential for activity because fatty acids are bound in thioester linkage to the sulfhydryl of the prosthetic group.

The protein localises to the cytoplasm. It participates in lipid metabolism; fatty acid biosynthesis. Carrier of the growing fatty acid chain in fatty acid biosynthesis. The protein is Acyl carrier protein of Kineococcus radiotolerans (strain ATCC BAA-149 / DSM 14245 / SRS30216).